Consider the following 117-residue polypeptide: Anti-sigma F factor antagonist (117 aa).

In terms of domain architecture, STAS spans 2 to 115; it reads HFQLEMVTRE…QAIDRVRGIV (114 aa). Serine 58 bears the Phosphoserine mark.

This sequence belongs to the anti-sigma-factor antagonist family. In terms of processing, phosphorylated by SpoIIAB on a serine residue.

Functionally, in the phosphorylated form it could act as an anti-anti-sigma factor that counteracts SpoIIAB and thus releases sigma f from inhibition. The sequence is that of Anti-sigma F factor antagonist (spoIIAA) from Lysinibacillus sphaericus (Bacillus sphaericus).